Consider the following 399-residue polypeptide: Mitochondrial glycine transporter (399 aa).

3 Solcar repeats span residues 35–137 (IPPY…LRSV), 164–251 (LSTT…CKTN), and 266–374 (GNWM…GRSW). Helical transmembrane passes span 41-66 (LAFG…TRLQ), 112-138 (GTAP…RSVA), 170-195 (LLTG…ARFE), 226-249 (GFTA…EACK), 270-296 (VVSA…KTRM), and 349-367 (GLGL…GWSI). Residues 379 to 399 (EASSSAQEAGTGTRLLDHKQV) form a disordered region.

It belongs to the mitochondrial carrier (TC 2.A.29) family. SLC25A38 subfamily.

It is found in the mitochondrion inner membrane. It carries out the reaction glycine(in) = glycine(out). Mitochondrial glycine transporter that imports glycine into the mitochondrial matrix. Plays an important role in providing glycine for the first enzymatic step in heme biosynthesis, the condensation of glycine with succinyl-CoA to produce 5-aminolevulinate (ALA) in the mitochondrial matrix. The protein is Mitochondrial glycine transporter of Mycosarcoma maydis (Corn smut fungus).